Consider the following 394-residue polypeptide: [Pyruvate dehydrogenase (acetyl-transferring)] kinase 1, mitochondrial (394 aa).

The N-terminal 20 residues, 1–20 (MWKIMRSWKCGGMRWAHRQR), are a transit peptide targeting the mitochondrion. The 261-residue stretch at 126–386 (AYPYELHNPP…DVYIKLKGPS (261 aa)) folds into the Histidine kinase domain. His148 is subject to Phosphohistidine; by autocatalysis. ATP-binding positions include 267–274 (EVFKNAFE), Asp304, 323–324 (ST), and 347–352 (GMGFGL).

The protein belongs to the PDK/BCKDK protein kinase family. Interacts with PKP2.

The protein resides in the mitochondrion matrix. It catalyses the reaction L-seryl-[pyruvate dehydrogenase E1 alpha subunit] + ATP = O-phospho-L-seryl-[pyruvate dehydrogenase E1 alpha subunit] + ADP + H(+). Functionally, inhibits the mitochondrial pyruvate dehydrogenase complex by phosphorylation of the E1 alpha subunit (PDA1), thus contributing to the regulation of glucose metabolism. Also involved in telomere maintenance. This chain is [Pyruvate dehydrogenase (acetyl-transferring)] kinase 1, mitochondrial, found in Saccharomyces cerevisiae (strain ATCC 204508 / S288c) (Baker's yeast).